A 561-amino-acid polypeptide reads, in one-letter code: Mercuric reductase (561 aa).

Positions 2 to 65 constitute an HMA domain; the sequence is THLKITGMTC…AVAGLGYKAT (64 aa). Residues Cys-11 and Cys-14 each contribute to the a metal cation site. The FAD site is built by Ala-110, Gly-130, and Thr-135. A disulfide bond links Cys-136 and Cys-141. Positions 145, 211, 403, and 411 each coordinate FAD. Hg(2+) is bound by residues Cys-558 and Cys-559.

This sequence belongs to the class-I pyridine nucleotide-disulfide oxidoreductase family. Homodimer. The cofactor is FAD.

It carries out the reaction Hg + NADP(+) + H(+) = Hg(2+) + NADPH. In terms of biological role, resistance to Hg(2+) in bacteria appears to be governed by a specialized system which includes mercuric reductase. MerA protein is responsible for volatilizing mercury as Hg(0). Plays a pivotal role in mercury resistance under thiol-depleted conditions and cell protection. Protects cells under thiol-depleted conditions. The protein is Mercuric reductase (merA) of Pseudomonas aeruginosa.